A 1115-amino-acid chain; its full sequence is Neural cell adhesion molecule 1 (1115 aa).

The first 19 residues, 1–19 (MLRTKDLIWTLFFLGTAVS), serve as a signal peptide directing secretion. 5 consecutive Ig-like C2-type domains span residues 20-111 (LQVD…ATVN), 116-205 (QKLM…KDIQ), 212-302 (PTVQ…ASIH), 309-402 (PKIT…MYLE), and 407-492 (PKLQ…ESLE). Over 20–711 (LQVDIVPSQG…NGSPTAGLST (692 aa)) the chain is Extracellular. Intrachain disulfides connect C41–C96 and C139–C189. Residues 152–156 (KHKGR) and 161–165 (KKDVR) each bind heparin. Residue N222 is glycosylated (N-linked (GlcNAc...) asparagine; partial). A disulfide bond links C235 and C288. N316, N348, N424, N450, and N479 each carry an N-linked (GlcNAc...) asparagine glycan. Residues C330 and C386 are joined by a disulfide bond. C427 and C480 are oxidised to a cystine. Fibronectin type-III domains are found at residues 500-599 (TPSS…TQPV) and 601-696 (EPSA…SAQP). T706 is lipidated: GPI-anchor amidated serine. Residues 712–729 (GAIVGILIVIFVLLLVVM) form a helical membrane-spanning segment. The Cytoplasmic segment spans residues 730–1115 (DITCYFLNKC…TQTKENESKA (386 aa)). Disordered regions lie at residues 756–809 (GAKG…TEPE), 839–912 (FATA…SASN), and 924–1115 (VLSP…ESKA). Over residues 758-799 (KGKDMEEGKAAFSKDESKEPIVEVRTEEERTPNHDGGKHTEP) the composition is skewed to basic and acidic residues. 2 positions are modified to phosphoserine: S770 and S774. Composition is skewed to low complexity over residues 800–809 (NETTPLTEPE), 845–856 (SPTSETTTLTSS), and 876–896 (TPSKGVTASSSSPASAPKVAP). 2 positions are modified to phosphoserine: S887 and S890. Composition is skewed to polar residues over residues 902 to 912 (DTPTSAPSASN) and 926 to 935 (SPSTPASAGE). A Phosphoserine modification is found at S926. T929 bears the Phosphothreonine mark. 2 stretches are compositionally biased toward low complexity: residues 936–974 (TSKAPPASKASPAPTPTPAGAASPLAAVAAPATDAPQAK) and 999–1012 (AATAPASPKSKAAT). 2 positions are modified to phosphoserine: S946 and S958. T1001 is subject to Phosphothreonine. At S1005 the chain carries Phosphoserine. Basic and acidic residues-rich tracts occupy residues 1019 to 1037 (EDLKMDEGNFKTPDIDLAK) and 1074 to 1091 (KTEKGPVETKSEPPESEA). T1030 is subject to Phosphothreonine.

Interacts with MDK. Found in a complex with SLC39A6, SLC39A10 and with NCAM1; this complex controls NCAM1 phosphorylation and integration into focal adhesion complexes during epithelial-tomesenchymal transition. Interacts with synaptic plasticity regulator PANTS. In terms of processing, polysialylated by ST8SIA2 and ST8SIA4. Polysialylation modulates cell interactions by confering both attractive and repulsive properties that are highly regulated by ST8SIA2 and ST8SIA4. Polysialylation is formed on a-2,3-linked sialic acid of core glycans.

It localises to the cell membrane. In terms of biological role, this protein is a cell adhesion molecule involved in neuron-neuron adhesion, neurite fasciculation, outgrowth of neurites, etc. The protein is Neural cell adhesion molecule 1 of Mus musculus (Mouse).